A 183-amino-acid polypeptide reads, in one-letter code: Heavy metal-associated isoprenylated plant protein 44 (183 aa).

An HMA domain is found at 50–113; it reads LQTVELKVRM…AVRRAGKRAE (64 aa). A metal cation contacts are provided by C61 and C64. At C180 the chain carries Cysteine methyl ester. The S-farnesyl cysteine moiety is linked to residue C180. Positions 181–183 are cleaved as a propeptide — removed in mature form; the sequence is RLM.

This sequence belongs to the HIPP family.

Functionally, heavy-metal-binding protein. This Arabidopsis thaliana (Mouse-ear cress) protein is Heavy metal-associated isoprenylated plant protein 44.